Consider the following 753-residue polypeptide: MAP/microtubule affinity-regulating kinase 3 (753 aa).

The interval 1-36 (MSTRTPLPTVNERDTENHTSHGDGRQEVTSRTSRSG) is disordered. A compositionally biased stretch (basic and acidic residues) spans 11-28 (NERDTENHTSHGDGRQEV). Position 42 is a phosphoserine (serine 42). In terms of domain architecture, Protein kinase spans 56-307 (YRLLKTIGKG…LEQIMKDRWI (252 aa)). Residues 62–70 (IGKGNFAKV) and lysine 85 contribute to the ATP site. Aspartate 178 acts as the Proton acceptor in catalysis. Threonine 211 carries the post-translational modification Phosphothreonine; by LKB1. The region spanning 326-365 (ISDQKRIDIMVGMGYSQEEIQESLSKMKYDEITATYLLLG) is the UBA domain. A phosphoserine mark is found at serine 368, serine 374, serine 376, serine 380, serine 383, leucine 384, serine 400, arginine 407, serine 419, and serine 469. The segment at 370–600 (ELDASDSSSS…TPLSQTRSRG (231 aa)) is disordered. Residues 374–385 (SDSSSSSNLSLA) are compositionally biased toward low complexity. The span at 391–400 (SDLNNSTGQS) shows a compositional bias: polar residues. 2 stretches are compositionally biased toward polar residues: residues 490 to 513 (STVP…CSER) and 521 to 548 (VIQN…SSAA). A phosphoserine mark is found at serine 540 and serine 543. At threonine 549 the chain carries Phosphothreonine. Threonine 564 carries the phosphothreonine; by PKC/PRKCZ modification. Serine 583, serine 598, serine 601, and serine 643 each carry phosphoserine. Residues 584–600 (PSLSHEATPLSQTRSRG) are compositionally biased toward polar residues. The interval 632 to 655 (NGRYEGSSRNVSAEQKDENKEAKP) is disordered. Positions 645 to 655 (EQKDENKEAKP) are enriched in basic and acidic residues. The region spanning 704 to 753 (DGHAENLVQWEMEVCKLPRLSLNGVRFKRISGTSIAFKNIASKIANELKL) is the KA1 domain.

The protein belongs to the protein kinase superfamily. CAMK Ser/Thr protein kinase family. SNF1 subfamily. In terms of assembly, interacts with MAPT/TAU. Interacts with DLG5 (via coiled-coil domain). Interacts with STK3/MST2 and STK4/MST1 in the presence of DLG5. Interacts with YWHAB, YWHAG, YWHAQ and YWHAZ. Interacts with PKP2 (via N-terminus). Interacts with CDC25C. Interacts with KSR1. Post-translationally, phosphorylated at Thr-211 by STK11/LKB1 in complex with STE20-related adapter-alpha (STRADA) pseudo kinase and CAB39. Phosphorylation at Thr-564 by PRKCZ/aPKC inhibits the kinase activity. As to expression, ubiquitous.

Its subcellular location is the cell membrane. The protein localises to the cell projection. It localises to the dendrite. The protein resides in the cytoplasm. It catalyses the reaction L-seryl-[protein] + ATP = O-phospho-L-seryl-[protein] + ADP + H(+). The enzyme catalyses L-threonyl-[protein] + ATP = O-phospho-L-threonyl-[protein] + ADP + H(+). With respect to regulation, activated by phosphorylation on Thr-211. Inhibited by phosphorylation on Thr-564. Functionally, serine/threonine-protein kinase. Involved in the specific phosphorylation of microtubule-associated proteins for MAP2 and MAP4. Phosphorylates the microtubule-associated protein MAPT/TAU. Phosphorylates CDC25C on 'Ser-216'. Regulates localization and activity of some histone deacetylases by mediating phosphorylation of HDAC7, promoting subsequent interaction between HDAC7 and 14-3-3 and export from the nucleus. Regulates localization and activity of MITF by mediating its phosphorylation, promoting subsequent interaction between MITF and 14-3-3 and retention in the cytosol. Negatively regulates the Hippo signaling pathway and antagonizes the phosphorylation of LATS1. Cooperates with DLG5 to inhibit the kinase activity of STK3/MST2 toward LATS1. Phosphorylates PKP2 and KSR1. In Homo sapiens (Human), this protein is MAP/microtubule affinity-regulating kinase 3 (MARK3).